Reading from the N-terminus, the 286-residue chain is Phosphate import ATP-binding protein PstB (286 aa).

Positions 40–281 (VVAKDFSIFY…PRDRMTEDYI (242 aa)) constitute an ABC transporter domain. 72-79 (GPSGCGKS) serves as a coordination point for ATP.

The protein belongs to the ABC transporter superfamily. Phosphate importer (TC 3.A.1.7) family. The complex is composed of two ATP-binding proteins (PstB), two transmembrane proteins (PstC and PstA) and a solute-binding protein (PstS).

The protein localises to the cell inner membrane. The catalysed reaction is phosphate(out) + ATP + H2O = ADP + 2 phosphate(in) + H(+). Functionally, part of the ABC transporter complex PstSACB involved in phosphate import. Responsible for energy coupling to the transport system. In Chlorobium luteolum (strain DSM 273 / BCRC 81028 / 2530) (Pelodictyon luteolum), this protein is Phosphate import ATP-binding protein PstB.